The chain runs to 175 residues: Transcription factor E (175 aa).

Residues 3 to 88 (ENPLIQQVLF…TWKPSLEKVP (86 aa)) form the HTH TFE/IIEalpha-type domain.

Belongs to the TFE family. In terms of assembly, monomer. Interaction with RNA polymerase subunits RpoF and RpoE is necessary for Tfe stimulatory transcription activity. Able to interact with Tbp and RNA polymerase in the absence of DNA promoter. Interacts both with the preinitiation and elongation complexes.

Functionally, transcription factor that plays a role in the activation of archaeal genes transcribed by RNA polymerase. Facilitates transcription initiation by enhancing TATA-box recognition by TATA-box-binding protein (Tbp), and transcription factor B (Tfb) and RNA polymerase recruitment. Not absolutely required for transcription in vitro, but particularly important in cases where Tbp or Tfb function is not optimal. It dynamically alters the nucleic acid-binding properties of RNA polymerases by stabilizing the initiation complex and destabilizing elongation complexes. Seems to translocate with the RNA polymerase following initiation and acts by binding to the non template strand of the transcription bubble in elongation complexes. This chain is Transcription factor E, found in Methanococcus maripaludis (strain C7 / ATCC BAA-1331).